A 164-amino-acid chain; its full sequence is Small ribosomal subunit protein uS5 (164 aa).

Positions 10–73 (LEERVVAINR…EAAKKNMIEV (64 aa)) constitute an S5 DRBM domain.

Belongs to the universal ribosomal protein uS5 family. Part of the 30S ribosomal subunit. Contacts proteins S4 and S8.

Functionally, with S4 and S12 plays an important role in translational accuracy. In terms of biological role, located at the back of the 30S subunit body where it stabilizes the conformation of the head with respect to the body. In Streptococcus pyogenes serotype M1, this protein is Small ribosomal subunit protein uS5.